A 517-amino-acid polypeptide reads, in one-letter code: Ovoinhibitor (517 aa).

Kazal-like domains lie at 67-132 (FGIE…ECRP), 133-197 (KHVT…ECKL), 198-263 (EIGS…KCRQ), 264-329 (EIPE…RCKE), 330-394 (RSTP…RCRE), 395-460 (EVPE…RCEE), and 461-517 (DITK…MAAC). An N-linked (GlcNAc...) asparagine glycan is attached at N72. 21 cysteine pairs are disulfide-bonded: C73-C112, C90-C109, C98-C130, C139-C177, C155-C174, C163-C195, C204-C243, C221-C240, C229-C261, C270-C309, C287-C306, C295-C327, C336-C374, C352-C371, C360-C392, C401-C440, C418-C437, C426-C458, C467-C499, C477-C496, and C485-C517. Residue N186 is glycosylated (N-linked (GlcNAc...) asparagine). N506 carries an N-linked (GlcNAc...) asparagine glycan.

Post-translationally, glycosylated. Expressed in oviduct (at protein level). Expressed in egg white (at protein level). Expressed in egg yolk plasma of non-fertilized eggs (at protein level). Expressed in the magnum of the oviduct (at protein level). Expressed in oviduct. Expressed in liver. Expressed in the cortico-medullary border region of the bursa of Fabricius by the bursal secretory dendritic-like cells. Highly expressed in the magnum of the oviduct, and at a lower level in uterus. Weakly expressed in white isthmus and very weakly in infundibulum. Not expressed in duodenum and kidney.

It localises to the secreted. Functionally, serine protease inhibitor involved in antimicrobial egg defense preventing contamination of table eggs (non-fertilized eggs) and protecting the chick embryo (fertilized eggs). Inhibits trypsin, chymotrypsin, elastase, subtilisin and a proteinase of fungus Aspergillus oryzae. Inhibits calcium-activated potassium channels KCNMA1 (bovine) and slo (Drosophila). Has antibacterial activity against B.thuringiensis LMSA 3.06.004, but not against S.aureus CIP 103 811, P.aeruginosa PAO1, B.cereus ATCC6464 or B.subtilis ATCC 6633. The polypeptide is Ovoinhibitor (Gallus gallus (Chicken)).